Here is a 166-residue protein sequence, read N- to C-terminus: Large ribosomal subunit protein uL10 (166 aa).

Belongs to the universal ribosomal protein uL10 family. Part of the ribosomal stalk of the 50S ribosomal subunit. The N-terminus interacts with L11 and the large rRNA to form the base of the stalk. The C-terminus forms an elongated spine to which L12 dimers bind in a sequential fashion forming a multimeric L10(L12)X complex.

Functionally, forms part of the ribosomal stalk, playing a central role in the interaction of the ribosome with GTP-bound translation factors. This chain is Large ribosomal subunit protein uL10, found in Shewanella oneidensis (strain ATCC 700550 / JCM 31522 / CIP 106686 / LMG 19005 / NCIMB 14063 / MR-1).